We begin with the raw amino-acid sequence, 140 residues long: Nucleoside diphosphate kinase (140 aa).

Positions 11, 59, 87, 93, 104, and 114 each coordinate ATP. Residue histidine 117 is the Pros-phosphohistidine intermediate of the active site.

The protein belongs to the NDK family. As to quaternary structure, homotetramer. Mg(2+) serves as cofactor.

It is found in the cytoplasm. It catalyses the reaction a 2'-deoxyribonucleoside 5'-diphosphate + ATP = a 2'-deoxyribonucleoside 5'-triphosphate + ADP. It carries out the reaction a ribonucleoside 5'-diphosphate + ATP = a ribonucleoside 5'-triphosphate + ADP. In terms of biological role, major role in the synthesis of nucleoside triphosphates other than ATP. The ATP gamma phosphate is transferred to the NDP beta phosphate via a ping-pong mechanism, using a phosphorylated active-site intermediate. The chain is Nucleoside diphosphate kinase from Methylobacterium nodulans (strain LMG 21967 / CNCM I-2342 / ORS 2060).